The following is a 418-amino-acid chain: Serine protease inhibitor A3N (418 aa).

Positions 1–29 (MTRLVTLELLMAGIGSALLCFPDCILGED) are cleaved as a signal peptide. S93 bears the Phosphoserine mark. Residues N104, N258, and N269 are each glycosylated (N-linked (GlcNAc...) asparagine). The tract at residues 367-394 (GTEAAAATGVKFVPMSAKLDPLIIAFDR) is RCL.

The protein belongs to the serpin family. N-glycosylated. As to expression, liver.

It localises to the secreted. In Rattus norvegicus (Rat), this protein is Serine protease inhibitor A3N (Serpina3n).